The primary structure comprises 346 residues: Protein RecA (346 aa).

Residue 67–74 (GPESSGKT) coordinates ATP.

It belongs to the RecA family.

The protein resides in the cytoplasm. In terms of biological role, can catalyze the hydrolysis of ATP in the presence of single-stranded DNA, the ATP-dependent uptake of single-stranded DNA by duplex DNA, and the ATP-dependent hybridization of homologous single-stranded DNAs. It interacts with LexA causing its activation and leading to its autocatalytic cleavage. In Mycobacterium marinum (strain ATCC BAA-535 / M), this protein is Protein RecA.